Here is a 191-residue protein sequence, read N- to C-terminus: Sec-independent protein translocase protein TatB (191 aa).

The helical transmembrane segment at 1 to 21 threads the bilayer; it reads MFDIGFSELFLILVIGLLVLG. Polar residues predominate over residues 119–138; that stretch reads ESTSQTLTEQLTPSEQVTEA. Disordered regions lie at residues 119-139 and 168-191; these read ESTS…TEAT and DDDD…DKKA. Residues 181 to 191 show a composition bias toward basic and acidic residues; it reads PQTEEIQDKKA.

This sequence belongs to the TatB family. As to quaternary structure, the Tat system comprises two distinct complexes: a TatABC complex, containing multiple copies of TatA, TatB and TatC subunits, and a separate TatA complex, containing only TatA subunits. Substrates initially bind to the TatABC complex, which probably triggers association of the separate TatA complex to form the active translocon.

It is found in the cell inner membrane. Functionally, part of the twin-arginine translocation (Tat) system that transports large folded proteins containing a characteristic twin-arginine motif in their signal peptide across membranes. Together with TatC, TatB is part of a receptor directly interacting with Tat signal peptides. TatB may form an oligomeric binding site that transiently accommodates folded Tat precursor proteins before their translocation. The protein is Sec-independent protein translocase protein TatB of Pasteurella multocida (strain Pm70).